The following is a 372-amino-acid chain: Ciliary neurotrophic factor receptor subunit alpha (372 aa).

Positions 1–22 (MAASVPWACCAVLAAAAAAVYT) are cleaved as a signal peptide. Residues 27–104 (PQEAPHVQYE…WHLRHQVLLH (78 aa)) form the Ig-like C2-type domain. Residues cysteine 46 and cysteine 89 are joined by a disulfide bond. N-linked (GlcNAc...) asparagine glycosylation is found at asparagine 60, asparagine 70, asparagine 142, and asparagine 190. 2 consecutive Fibronectin type-III domains span residues 108–205 (PPRE…VKPD) and 206–306 (PPEN…TEEP). The WSXWS motif motif lies at 290–294 (WSDWS). The segment at 301–338 (PWTEEPRHLTTEAQAPETTTSTTSSLAPPPTTKICDPG) is disordered. Residues 311–326 (TEAQAPETTTSTTSSL) show a composition bias toward low complexity. Serine 342 carries the GPI-anchor amidated serine lipid modification. The propeptide at 343 to 372 (GGGPSILFLTSVPVTLVLAAAAATANNLLI) is removed in mature form.

The protein belongs to the type I cytokine receptor family. Type 3 subfamily. In terms of assembly, forms a heterotrimer with LIFR and IL6ST. Interacts with heterodimeric neurotropic cytokine composed of CLCF1/CLC and CRLF1/CLF-1. Either alone or in complex with the heterodimer CLCF1-CRLF1 interacts with SORL1; this interaction may promote internalization and lysosomal degradation.

It localises to the cell membrane. Functionally, binds to CNTF. The alpha subunit provides the receptor specificity. This Mus musculus (Mouse) protein is Ciliary neurotrophic factor receptor subunit alpha (Cntfr).